The chain runs to 464 residues: 3-isopropylmalate dehydratase large subunit (464 aa).

[4Fe-4S] cluster-binding residues include Cys-345, Cys-405, and Cys-408.

It belongs to the aconitase/IPM isomerase family. LeuC type 1 subfamily. In terms of assembly, heterodimer of LeuC and LeuD. The cofactor is [4Fe-4S] cluster.

The enzyme catalyses (2R,3S)-3-isopropylmalate = (2S)-2-isopropylmalate. It functions in the pathway amino-acid biosynthesis; L-leucine biosynthesis; L-leucine from 3-methyl-2-oxobutanoate: step 2/4. Catalyzes the isomerization between 2-isopropylmalate and 3-isopropylmalate, via the formation of 2-isopropylmaleate. In Bacteroides thetaiotaomicron (strain ATCC 29148 / DSM 2079 / JCM 5827 / CCUG 10774 / NCTC 10582 / VPI-5482 / E50), this protein is 3-isopropylmalate dehydratase large subunit.